The chain runs to 309 residues: Manganese ABC transporter substrate-binding lipoprotein PsaA (309 aa).

Positions 1-19 are cleaved as a signal peptide; the sequence is MKKLGTLLVLFLSAIILVA. A lipid anchor (N-palmitoyl cysteine) is attached at Cys-20. Cys-20 carries the S-diacylglycerol cysteine lipid modification. Residues His-67, His-139, Glu-205, and Asp-280 each contribute to the Mn(2+) site.

The protein belongs to the bacterial solute-binding protein 9 family. Lipoprotein receptor antigen (Lrai) subfamily.

The protein resides in the cell membrane. Functionally, part of the ATP-binding cassette (ABC) transport system PsaABC involved in manganese import. Binds manganese with high affinity and specificity and delivers it to the membrane permease for translocation into the cytoplasm. Also acts as an adhesin which is involved on adherence to extracellular matrix. It is an important factor in pathogenesis and infection. The polypeptide is Manganese ABC transporter substrate-binding lipoprotein PsaA (psaA) (Streptococcus pneumoniae serotype 4 (strain ATCC BAA-334 / TIGR4)).